The chain runs to 309 residues: tRNA pseudouridine synthase B (309 aa).

The active-site Nucleophile is Asp51.

The protein belongs to the pseudouridine synthase TruB family. Type 1 subfamily.

The catalysed reaction is uridine(55) in tRNA = pseudouridine(55) in tRNA. In terms of biological role, responsible for synthesis of pseudouridine from uracil-55 in the psi GC loop of transfer RNAs. This chain is tRNA pseudouridine synthase B, found in Coxiella burnetii (strain RSA 331 / Henzerling II).